A 595-amino-acid chain; its full sequence is MLPVQTSNLAAAFTDAVRALAPADAALPAVTFERPKAAAHGDLACNIAMQVARALKSNPRELAQRIVAMVQADPRAAELVAGMEIAGPGFINLRLTPAAKADVLRAVLSEGDGYGAQERGMHGNVLVEFVSANPTGPLHVGHGRQAALGDALANLLSWQGYDVHREFYYNDAGVQIQNLAVSVQARTRGFKPGDANWPEAAYNGDYIGDIAADFLAGKTVSASDGEPVTASGNPEDLDSIRKFAVTYLRNEQDIDLQAFGVKFDHYYLESSLYTDGRVEAAVQGLVGKGKTYESEGALWLRTTDDGDDKDRVMKKTDGTYTYFVPDVAYHTTKWERGFTKVINVQGSDHHGTIARVRAGLQGLDIGIPKGYPDYVLHKMVTVMKNGEEVKISKRAGSYVTVRDLIEWSNGGDETIRGCLDAGVADWPEHFTRGRDAVRFFLLSRKADTEFVFDVDLALKQNDENPVYYVQYAHARICSIFESWGGADWESRLAELAGTDLAAVTGADASPQALALGQRLAEFPEMLAAAAGELAPHAVAFYLRDLAGDFHAFYNADRVLVDDEAVKRARLALLAATRQVLRNGLAVIGVSAPRRM.

The short motif at 132–142 (ANPTGPLHVGH) is the 'HIGH' region element.

This sequence belongs to the class-I aminoacyl-tRNA synthetase family. In terms of assembly, monomer.

Its subcellular location is the cytoplasm. The catalysed reaction is tRNA(Arg) + L-arginine + ATP = L-arginyl-tRNA(Arg) + AMP + diphosphate. This is Arginine--tRNA ligase from Cupriavidus pinatubonensis (strain JMP 134 / LMG 1197) (Cupriavidus necator (strain JMP 134)).